The following is a 261-amino-acid chain: Ribonuclease PH (261 aa).

Phosphate is bound by residues arginine 87 and 125–127 (GTR).

This sequence belongs to the RNase PH family. As to quaternary structure, homohexameric ring arranged as a trimer of dimers.

It carries out the reaction tRNA(n+1) + phosphate = tRNA(n) + a ribonucleoside 5'-diphosphate. In terms of biological role, phosphorolytic 3'-5' exoribonuclease that plays an important role in tRNA 3'-end maturation. Removes nucleotide residues following the 3'-CCA terminus of tRNAs; can also add nucleotides to the ends of RNA molecules by using nucleoside diphosphates as substrates, but this may not be physiologically important. Probably plays a role in initiation of 16S rRNA degradation (leading to ribosome degradation) during starvation. The sequence is that of Ribonuclease PH from Thermoanaerobacter pseudethanolicus (strain ATCC 33223 / 39E) (Clostridium thermohydrosulfuricum).